The chain runs to 295 residues: 2S seed storage protein (295 aa).

Residues 1–20 (MAKQIVLALAFAALVAFATA) form the signal peptide. Positions 21–161 (HTTIITTTIE…TITTTVTESN (141 aa)) are excised as a propeptide. A compositionally biased stretch (polar residues) spans 195–208 (EQQMQQSPRSTRPY). The segment at 195 to 215 (EQQMQQSPRSTRPYQQRPGQQ) is disordered.

It belongs to the 2S seed storage albumins family. The 38 kDa precursor may be cleaved into two polypeptides of approximately the same size. The mature protein is composed of a single polypeptide containing one or more intra-molecular disulfide linkages.

Its function is as follows. This is a 2S seed storage protein. This is 2S seed storage protein (HAG5) from Helianthus annuus (Common sunflower).